Here is a 274-residue protein sequence, read N- to C-terminus: Bis(5'-nucleosyl)-tetraphosphatase, symmetrical (274 aa).

Belongs to the Ap4A hydrolase family.

It catalyses the reaction P(1),P(4)-bis(5'-adenosyl) tetraphosphate + H2O = 2 ADP + 2 H(+). Its function is as follows. Hydrolyzes diadenosine 5',5'''-P1,P4-tetraphosphate to yield ADP. The sequence is that of Bis(5'-nucleosyl)-tetraphosphatase, symmetrical from Shewanella oneidensis (strain ATCC 700550 / JCM 31522 / CIP 106686 / LMG 19005 / NCIMB 14063 / MR-1).